Here is a 267-residue protein sequence, read N- to C-terminus: 4-hydroxy-tetrahydrodipicolinate reductase (267 aa).

NAD(+) is bound by residues 8-13 (GAAGRM) and Glu-34. Arg-35 is a binding site for NADP(+). NAD(+) contacts are provided by residues 98–100 (GST) and 122–125 (APNM). His-155 acts as the Proton donor/acceptor in catalysis. A (S)-2,3,4,5-tetrahydrodipicolinate-binding site is contributed by His-156. The active-site Proton donor is the Lys-159. 165–166 (GT) provides a ligand contact to (S)-2,3,4,5-tetrahydrodipicolinate.

This sequence belongs to the DapB family.

Its subcellular location is the cytoplasm. The enzyme catalyses (S)-2,3,4,5-tetrahydrodipicolinate + NAD(+) + H2O = (2S,4S)-4-hydroxy-2,3,4,5-tetrahydrodipicolinate + NADH + H(+). It catalyses the reaction (S)-2,3,4,5-tetrahydrodipicolinate + NADP(+) + H2O = (2S,4S)-4-hydroxy-2,3,4,5-tetrahydrodipicolinate + NADPH + H(+). The protein operates within amino-acid biosynthesis; L-lysine biosynthesis via DAP pathway; (S)-tetrahydrodipicolinate from L-aspartate: step 4/4. Functionally, catalyzes the conversion of 4-hydroxy-tetrahydrodipicolinate (HTPA) to tetrahydrodipicolinate. This is 4-hydroxy-tetrahydrodipicolinate reductase from Geobacter sp. (strain M21).